Reading from the N-terminus, the 757-residue chain is MESADSTGKGSTEQSESQRQSQMDRLDREEAFYQFVNNLNDEDYRLMRDNNLLGTPGEITKEELLQRLQQIKEGPPQPSTEETRGDSVSTGEDPAEDSSNGDSIIDWLNSVRQTGNTTRSGQRGNQSWRAVSRTNPNSGDFRFSLEINVNRTSGTASMPSLDQSAEMPGPEDMEVSSQGEAENVPEPETVPESIREPESVDEPVSVAEPVSVAEPVSVAEPESVAEPESVAASVPVPESVPEPESVPEPESVPEPESVPEPESVPEPESVPEPESVPEPESVPEPESVPEPESVPEPESVPEPESVPEPESIAEPESVPVPESVPVATRPAPVEVTVEEAPIQRGQRRARSRSPDQRRTRARTDRSRSPLYQTVDPPIRRAQHSSSQTVDASNTEEAEGSSRTRHHVSSQVHSSSSNETEGSSRTRQHITARQQALGTEGQSQSTVHLSNPESRSSSQTPQTDSPSNAETTGTGQRPPTIVLDLQVRRVRPGDYRQRDSIANRTRSRSQTPNNTVTYESERGGFRRTFSRSERAGVRTYVSTIRIPIRRILNTGLSETTSVAIQTMLRQIMTGFGELSYFMYNDNDADPNNPTAVSPPAAVPGEVQNNPSAEVRAPIAEPAEPVAPVESDEGSNVATSATRREGRNSRGGVTLEESGSLPFLSLAQFFLLNEDDDDQPRGLTKEQIDNLSTRNYGENDALKTCSVCITEYTEGNKLRKLPCSHEYHIHCIDRWLSENSTCPICRRAVLVAGNRESIV.

The segment covering 1-10 (MESADSTGKG) has biased composition (polar residues). Disordered stretches follow at residues 1-29 (MESA…LDRE), 68-519 (LQQI…TYES), and 619-652 (EPAE…GGVT). Over residues 11–21 (STEQSESQRQS) the composition is skewed to low complexity. Polar residues-rich tracts occupy residues 110 to 138 (SVRQ…NPNS) and 147 to 163 (INVN…SLDQ). Tandem repeats lie at residues 197–202 (PESVDE), 203–208 (PVSVAE), 209–214 (PVSVAE), 215–220 (PVSVAE), 221–226 (PESVAE), 227–232 (PESVAA), 237–242 (PESVPE), 243–248 (PESVPE), 249–254 (PESVPE), 255–260 (PESVPE), 261–266 (PESVPE), 267–272 (PESVPE), 273–278 (PESVPE), 279–284 (PESVPE), 285–290 (PESVPE), 291–296 (PESVPE), 297–302 (PESVPE), 303–308 (PESVPE), 309–314 (PESIAE), 315–320 (PESVPV), and 321–326 (PESVPV). The tract at residues 197-326 (PESVDEPVSV…SVPVPESVPV (130 aa)) is 21 X 6 AA approximate repeats of P-[EV]-S-V-[PA]-[EV]. The segment covering 202–237 (EPVSVAEPVSVAEPVSVAEPESVAEPESVAASVPVP) has biased composition (low complexity). The span at 245–313 (SVPEPESVPE…ESVPEPESIA (69 aa)) shows a compositional bias: acidic residues. Positions 314-327 (EPESVPVPESVPVA) are enriched in low complexity. The segment covering 352-367 (RSPDQRRTRARTDRSR) has biased composition (basic and acidic residues). The span at 383 to 392 (HSSSQTVDAS) shows a compositional bias: polar residues. Residues 408–424 (SSQVHSSSSNETEGSSR) are compositionally biased toward low complexity. Residues 428 to 452 (HITARQQALGTEGQSQSTVHLSNPE) are compositionally biased toward polar residues. Positions 453–466 (SRSSSQTPQTDSPS) are enriched in low complexity. Positions 467 to 476 (NAETTGTGQR) are enriched in polar residues. Over residues 490–500 (RPGDYRQRDSI) the composition is skewed to basic and acidic residues. Over residues 501–517 (ANRTRSRSQTPNNTVTY) the composition is skewed to polar residues. The RING-type; atypical zinc finger occupies 703-744 (CSVCITEYTEGNKLRKLPCSHEYHIHCIDRWLSENSTCPICR). A PDZ-binding motif is present at residues 754–757 (ESIV).

The protein belongs to the RNF12 family. Forms homodimers through the C-terminal region. The N-terminus interacts with the homeobox of LIM/homeobox factor lhx1/lim1, with lhx3/lim3 and lhx5/lim5, and with the N-terminus of ldb1. Shows overlapping expression with lhx1/lim1 and ldb1 in the gastrula mesoderm, and expression overlaps with ldb1 throughout early embryogenesis. After gastrulation, expression is gradually restricted to tissues originated from the ectoderm, the neuroectoderm, neural crest and epidermis, and subsequently to the neural tube as well as the head and tailbud region.

Its subcellular location is the nucleus. The enzyme catalyses S-ubiquitinyl-[E2 ubiquitin-conjugating enzyme]-L-cysteine + [acceptor protein]-L-lysine = [E2 ubiquitin-conjugating enzyme]-L-cysteine + N(6)-ubiquitinyl-[acceptor protein]-L-lysine.. It participates in protein modification; protein ubiquitination. Functionally, acts as an E3 ubiquitin-protein ligase specific for ldb1, mediating ubiquitination and proteasome-dependent degradation of excess ldb1 in a RING-dependent manner. Does not degrade ldb1 bound to lhx1/lim1, nor lim1 itself and thus contributes to the establishment of proper ldb1-lhx1/lim1 stoichiometry and the formation of a ldb1-lhx1/lim1 complex. Interferes with Spemann organizer function and suppresses secondary axis formation induced by ldb1 and lhx1/lim1. This is E3 ubiquitin-protein ligase RNF12-B (rnf12-b) from Xenopus laevis (African clawed frog).